We begin with the raw amino-acid sequence, 424 residues long: Interferon regulatory factor 8 (424 aa).

The IRF tryptophan pentad repeat DNA-binding region spans 7–114; the sequence is GRRLRQWLIE…EPYKVYRIVP (108 aa).

Belongs to the IRF family. In terms of assembly, interacts with COPS2. Interacts (via C-terminus) with TRIM21 (via C-terminus). Interacts with the BATF-JUNB heterodimer. Interacts with BATF (via bZIP domain); the interaction is direct. Interacts with SPI1. In terms of processing, ubiquitinated. Ubiquitination by TRIM21 in macrophages, a process that is strongly increased upon interferon gamma stimulation, leds to the enhanced transcriptional activity of target cytokine genes. Ubiquitination leads to its degradation by the proteasome. Post-translationally, sumoylated with SUMO3. Desumoylated by SENP1. Expressed in bone marrow macrophages (at protein level). Mainly expressed in lymphoid tissues. Predominantly expressed in CD8(+)-expressing dendritic cells.

It localises to the nucleus. Its subcellular location is the cytoplasm. Its function is as follows. Transcription factor that specifically binds to the upstream regulatory region of type I interferon (IFN) and IFN-inducible MHC class I genes (the interferon consensus sequence (ICS)). Can both act as a transcriptional activator or repressor. Plays a negative regulatory role in cells of the immune system. Involved in CD8(+) dendritic cell differentiation by forming a complex with the BATF-JUNB heterodimer in immune cells, leading to recognition of AICE sequence (5'-TGAnTCA/GAAA-3'), an immune-specific regulatory element, followed by cooperative binding of BATF and IRF8 and activation of genes. Required for the development of plasmacytoid dendritic cells (pDCs), which produce most of the type I IFN in response to viral infection. Positively regulates macroautophagy in dendritic cells. Acts as a transcriptional repressor of osteoclast differentiation factors such as NFATC1 and EEIG1. This Mus musculus (Mouse) protein is Interferon regulatory factor 8.